Consider the following 244-residue polypeptide: Ribosomal RNA small subunit methyltransferase G (244 aa).

S-adenosyl-L-methionine is bound by residues G79, F84, 102–104 (DST), 130–131 (AE), and R149. The disordered stretch occupies residues 225–244 (DRYPRREGVPNQQPLFWSAK). The segment covering 234–244 (PNQQPLFWSAK) has biased composition (polar residues).

The protein belongs to the methyltransferase superfamily. RNA methyltransferase RsmG family.

Its subcellular location is the cytoplasm. Functionally, specifically methylates the N7 position of a guanine in 16S rRNA. In Deinococcus deserti (strain DSM 17065 / CIP 109153 / LMG 22923 / VCD115), this protein is Ribosomal RNA small subunit methyltransferase G.